Reading from the N-terminus, the 560-residue chain is MSNKVKSDIEIASKAEILPVTTIAEHLGLDADALELYGKYKAKLSYDTIHSLKDKEPGKLVLVTAINPTPAGEGKSTVTVGLGDALSKKDKKTVIALREPSLGPTMGIKGGATGGGYAQVIPMEDINLHFTGDFHAITAANNALSAFIDNHMQQGNDLDIDGRRIVWKRVVDLNDRALRKVVVGLGGPIQGVPREDGFDITVASEIMAIICLASDLKDLKKRLSEIVIGYNYKKEPITVGEMGYEGALTLLLKDALKPNLVQTLEHTPAIVHGGPFANIAHGCNSVSATSTALRLGEYVVTEAGFGADLGAEKFLDIKVPALGKAPDCVVIVATIRALKMHGGALKTELSEENVDALAKGFTNLQKHTESIQTFGIPYVVAINKFITDSDAEVAKLEALCEEHGIPFSLTEVWEKGGDGGLELADKVIAAVESGEADYKRIYDDAWSIEEKLEAIVTKVYGGIGVELSSKAQKQIVEFKKYGWDRYPICMAKTQYSLSDDPTLLGRPTDFVIHIREFIPKLGAGFVVALTGDVMTMPGLPKKPAALNMDVDENGNAQGLF.

69–76 contacts ATP; that stretch reads TPAGEGKS.

This sequence belongs to the formate--tetrahydrofolate ligase family.

It carries out the reaction (6S)-5,6,7,8-tetrahydrofolate + formate + ATP = (6R)-10-formyltetrahydrofolate + ADP + phosphate. Its pathway is one-carbon metabolism; tetrahydrofolate interconversion. This chain is Formate--tetrahydrofolate ligase, found in Listeria monocytogenes serotype 4b (strain CLIP80459).